The sequence spans 95 residues: Histone-like DNA-binding protein (95 aa).

Belongs to the bacterial histone-like protein family.

This chain is Histone-like DNA-binding protein, found in Rickettsia rickettsii.